Consider the following 284-residue polypeptide: Probable endonuclease 4 (284 aa).

Zn(2+) is bound by residues His69, His109, Glu145, Asp179, His182, His216, Asp229, His231, and Glu261.

This sequence belongs to the AP endonuclease 2 family. The cofactor is Zn(2+).

It carries out the reaction Endonucleolytic cleavage to 5'-phosphooligonucleotide end-products.. Endonuclease IV plays a role in DNA repair. It cleaves phosphodiester bonds at apurinic or apyrimidinic (AP) sites, generating a 3'-hydroxyl group and a 5'-terminal sugar phosphate. This chain is Probable endonuclease 4, found in Chlorobium phaeobacteroides (strain BS1).